The following is a 198-amino-acid chain: Ribonuclease HII (198 aa).

One can recognise an RNase H type-2 domain in the interval 1–198; that stretch reads MLCGIDEAGR…QRRSFFVKNL (198 aa). Positions 6, 7, and 112 each coordinate a divalent metal cation.

It belongs to the RNase HII family. It depends on Mn(2+) as a cofactor. Requires Mg(2+) as cofactor.

The protein localises to the cytoplasm. It catalyses the reaction Endonucleolytic cleavage to 5'-phosphomonoester.. Endonuclease that specifically degrades the RNA of RNA-DNA hybrids. The protein is Ribonuclease HII of Treponema denticola (strain ATCC 35405 / DSM 14222 / CIP 103919 / JCM 8153 / KCTC 15104).